A 137-amino-acid polypeptide reads, in one-letter code: Small ribosomal subunit protein uS12 (137 aa).

A 3-methylthioaspartic acid modification is found at Asp-89. The interval 101-137 (SLDTSGVADRKQSRSKYGAKQPKAGAPAAPVKGKGKK) is disordered. Positions 116-137 (KYGAKQPKAGAPAAPVKGKGKK) are enriched in low complexity.

This sequence belongs to the universal ribosomal protein uS12 family. As to quaternary structure, part of the 30S ribosomal subunit. Contacts proteins S8 and S17. May interact with IF1 in the 30S initiation complex.

Functionally, with S4 and S5 plays an important role in translational accuracy. Interacts with and stabilizes bases of the 16S rRNA that are involved in tRNA selection in the A site and with the mRNA backbone. Located at the interface of the 30S and 50S subunits, it traverses the body of the 30S subunit contacting proteins on the other side and probably holding the rRNA structure together. The combined cluster of proteins S8, S12 and S17 appears to hold together the shoulder and platform of the 30S subunit. In Chlorobium chlorochromatii (strain CaD3), this protein is Small ribosomal subunit protein uS12.